Consider the following 254-residue polypeptide: Winged helix repair factor 1 (254 aa).

A Bipartite nuclear localization signal motif is present at residues 4 to 21; the sequence is KRRLLASEAFGVKRRRAP. 3 winged helix domain regions span residues 32–104, 120–179, and 180–254; these read RAGS…GIVF, PCAG…LAVP, and GAGR…LPDT.

It belongs to the STK19 family. As to quaternary structure, monomer in solution. Homodimer; when bound to DNA. Component of a transcription-coupled nucleotide excision repair (TC-NER) complex composed of STK19, ERCC6, ERCC8, DDA1, DDB1, ELOF1 and UVSSA which assembles and interacts with the multiprotein RNA polymerase II complex when it stalls at DNA lesions.

It localises to the nucleus. Functionally, DNA-binding protein which is required for efficient transcription-coupled nucleotide excision repair (TC-NER). Acts as part of a TC-NER complex which assembles and interacts with RNA polymerase II (RNAPII) when it stalls at DNA lesions. TC-NER complex subunit UVSSA binds to the GTF2H1/p62 subunit of the TFIIH transcription factor complex, tethering TFIIH to the TC-NER complex. WHR1/STK19 then interacts with the XPD helicase subunit of TFIIH which guides TFIIH to DNA downstream of the stalled RNAPII, ensuring DNA repair. Directly interacts with RNAPII and also binds to downstream DNA. Promotes the timely removal of DNA damage-stalled RNAPII, allowing downstream NER factors to access DNA lesions. Required for monoubiquitination of UVSSA. Regulates repositioning and stabilization of UVSSA within the TC-NER complex. Stimulates ubiquitination of RNAPII complex member RBP1. Also binds to RNA and regulates the expression levels of many mRNAs. This Mus musculus (Mouse) protein is Winged helix repair factor 1.